We begin with the raw amino-acid sequence, 240 residues long: Endonuclease NucS 1 (240 aa).

Belongs to the NucS endonuclease family.

The protein localises to the cytoplasm. In terms of biological role, cleaves both 3' and 5' ssDNA extremities of branched DNA structures. This is Endonuclease NucS 1 from Halobacterium salinarum (strain ATCC 700922 / JCM 11081 / NRC-1) (Halobacterium halobium).